Here is a 418-residue protein sequence, read N- to C-terminus: NADH-quinone oxidoreductase subunit D (418 aa).

It belongs to the complex I 49 kDa subunit family. In terms of assembly, NDH-1 is composed of 14 different subunits. Subunits NuoB, C, D, E, F, and G constitute the peripheral sector of the complex.

The protein localises to the cell inner membrane. The enzyme catalyses a quinone + NADH + 5 H(+)(in) = a quinol + NAD(+) + 4 H(+)(out). Its function is as follows. NDH-1 shuttles electrons from NADH, via FMN and iron-sulfur (Fe-S) centers, to quinones in the respiratory chain. The immediate electron acceptor for the enzyme in this species is believed to be ubiquinone. Couples the redox reaction to proton translocation (for every two electrons transferred, four hydrogen ions are translocated across the cytoplasmic membrane), and thus conserves the redox energy in a proton gradient. This chain is NADH-quinone oxidoreductase subunit D, found in Neisseria meningitidis serogroup B (strain ATCC BAA-335 / MC58).